A 516-amino-acid chain; its full sequence is Probable cyclic di-GMP phosphodiesterase PdeB (516 aa).

The next 2 helical transmembrane spans lie at 6–26 and 242–262; these read LVGLISGVLILSVLLPVGLSI and QVFIWLPLGLVIGLLAAMFVL. The EAL domain maps to 268–516; the sequence is IQSPHHRLQD…DFLRWAEQHL (249 aa).

Its subcellular location is the cell inner membrane. It catalyses the reaction 3',3'-c-di-GMP + H2O = 5'-phosphoguanylyl(3'-&gt;5')guanosine + H(+). In terms of biological role, phosphodiesterase (PDE) that catalyzes the hydrolysis of cyclic-di-GMP (c-di-GMP) to 5'-pGpG. This Escherichia coli (strain K12) protein is Probable cyclic di-GMP phosphodiesterase PdeB.